We begin with the raw amino-acid sequence, 741 residues long: Homeobox protein AHox1 (741 aa).

Disordered regions lie at residues 1-30 (MEKM…KSSS), 61-96 (KRRL…NFCR), 146-183 (VNPL…KSCC), 203-226 (ADSD…INQD), 357-383 (KTEE…PIRT), 476-501 (FDFP…NPQT), and 616-642 (QYGH…GTVK). Residues 7–19 (KSVSPVPFNNSNN) are compositionally biased toward low complexity. Basic and acidic residues predominate over residues 63 to 78 (RLLDPQNKKKQNRFER). Residues 79–92 (YSSSNHAQEQSSEE) show a composition bias toward polar residues. Low complexity predominate over residues 169-181 (SFSSSSEASDSKS). A compositionally biased stretch (polar residues) spans 363 to 375 (RSPSETKQYSPDA). Residues 616 to 629 (QYGHMSSSQNPHSE) show a composition bias toward polar residues. Over residues 630–639 (TQNRSEEVRG) the composition is skewed to basic and acidic residues. Residues 645-704 (RKWNRAVFSLMQRRGLEKSFQSQKYVAKPERRKLADALSLTDAQVKIWFQNRRMKWRQEI) constitute a DNA-binding region (homeobox). The tract at residues 722–741 (EIEKEKTQTPSDEGEVINVD) is disordered.

It belongs to the H2.0 homeobox family. Expressed in the tissues of endodermal origin.

The protein resides in the nucleus. This Halocynthia roretzi (Sea squirt) protein is Homeobox protein AHox1 (AHOX1).